The following is a 509-amino-acid chain: 2-isopropylmalate synthase (509 aa).

Residues 5-267 form the Pyruvate carboxyltransferase domain; sequence IQIFDTTLRD…QTALNLEETK (263 aa). The Mn(2+) site is built by Asp-14, His-202, His-204, and Asn-238. The tract at residues 391 to 509 is regulatory domain; it reads KLETLQLQYV…AAENVEKVGN (119 aa).

The protein belongs to the alpha-IPM synthase/homocitrate synthase family. LeuA type 1 subfamily. Homodimer. The cofactor is Mn(2+).

The protein localises to the cytoplasm. It catalyses the reaction 3-methyl-2-oxobutanoate + acetyl-CoA + H2O = (2S)-2-isopropylmalate + CoA + H(+). Its pathway is amino-acid biosynthesis; L-leucine biosynthesis; L-leucine from 3-methyl-2-oxobutanoate: step 1/4. Functionally, catalyzes the condensation of the acetyl group of acetyl-CoA with 3-methyl-2-oxobutanoate (2-ketoisovalerate) to form 3-carboxy-3-hydroxy-4-methylpentanoate (2-isopropylmalate). This Staphylococcus aureus (strain MRSA252) protein is 2-isopropylmalate synthase.